The following is a 232-amino-acid chain: MENLKKALLEQFDLVFSDETLLETAFTHTSYANEHRLLKISHNERLEFLGDAVLQLIISEYLYTKYPKRPEGDLSKLRSMIVREESLAGFARDCQFDQFIKLGRGEEKSGGRNRDTILGDLFEAFLGALLLDKGVEAVKSFLYQVMIPKVEAGDFERVTDYKTKLQELLQINGDVEIAYQVVSETGPAHAKNFEVAVLINGRKSGQGQGRSKKLAEQEAAKNAFEKESSSCF.

Positions lysine 5–glycine 134 constitute an RNase III domain. Glutamate 47 provides a ligand contact to Mg(2+). Aspartate 51 is an active-site residue. Positions 120 and 123 each coordinate Mg(2+). The active site involves glutamate 123. One can recognise a DRBM domain in the interval aspartate 160–serine 229. The tract at residues lysine 203–phenylalanine 232 is disordered. A compositionally biased stretch (basic and acidic residues) spans lysine 213–phenylalanine 232.

Belongs to the ribonuclease III family. In terms of assembly, homodimer. Mg(2+) is required as a cofactor.

It is found in the cytoplasm. The enzyme catalyses Endonucleolytic cleavage to 5'-phosphomonoester.. In terms of biological role, digests double-stranded RNA. Involved in the processing of primary rRNA transcript to yield the immediate precursors to the large and small rRNAs (23S and 16S). Processes some mRNAs, and tRNAs when they are encoded in the rRNA operon. Processes pre-crRNA and tracrRNA of type II CRISPR loci if present in the organism. The chain is Ribonuclease 3 from Streptococcus sanguinis (strain SK36).